The sequence spans 194 residues: MEEKLKKAKIIFVVGGPGSGKGTQCEKIVHKYGYTHLSTGDLLRAEVSSGSARGKKLSEIMEKGQLVPLETVLDMLRDAMVAKADTSKGFLIDGYPRQVQQGEEFERRIAQPTLLLYVDAGPETMQKRLLKRGETSGRVDDNEETIKKRLETYYKATEPVIAFYEKRGIVRKVNAEGSVDNVFSQVCTHLDALK.

N-acetylmethionine is present on Met-1. 18–23 serves as a coordination point for ATP; it reads GSGKGT. Ser-38 bears the Phosphoserine mark. Positions 38-67 are NMP; it reads STGDLLRAEVSSGSARGKKLSEIMEKGQLV. Residues Thr-39, Arg-44, 65 to 67, 94 to 97, and Gln-101 contribute to the AMP site; these read QLV and GYPR. An LID region spans residues 131 to 141; sequence KRGETSGRVDD. Position 132 (Arg-132) interacts with ATP. The AMP site is built by Arg-138 and Arg-149. Gly-177 lines the ATP pocket.

This sequence belongs to the adenylate kinase family. AK1 subfamily. As to quaternary structure, monomer. Mg(2+) serves as cofactor.

It is found in the cytoplasm. It catalyses the reaction a ribonucleoside 5'-phosphate + ATP = a ribonucleoside 5'-diphosphate + ADP. The enzyme catalyses AMP + ATP = 2 ADP. It carries out the reaction dAMP + ATP = dADP + ADP. The catalysed reaction is dATP + AMP = dADP + ADP. It catalyses the reaction dAMP + dATP = 2 dADP. The enzyme catalyses a 2'-deoxyribonucleoside 5'-diphosphate + ATP = a 2'-deoxyribonucleoside 5'-triphosphate + ADP. It carries out the reaction a ribonucleoside 5'-diphosphate + ATP = a ribonucleoside 5'-triphosphate + ADP. The catalysed reaction is CDP + GTP = CTP + GDP. It catalyses the reaction GDP + ATP = GTP + ADP. The enzyme catalyses UDP + ATP = UTP + ADP. It carries out the reaction GTP + UDP = UTP + GDP. The catalysed reaction is dTDP + GTP = dTTP + GDP. It catalyses the reaction dCDP + GTP = dCTP + GDP. The enzyme catalyses dGDP + ATP = dGTP + ADP. It carries out the reaction dADP + GTP = dATP + GDP. The catalysed reaction is thiamine diphosphate + ADP = thiamine triphosphate + AMP. Catalyzes the reversible transfer of the terminal phosphate group between ATP and AMP. Also displays broad nucleoside diphosphate kinase activity. Plays an important role in cellular energy homeostasis and in adenine nucleotide metabolism. Also catalyzes at a very low rate the synthesis of thiamine triphosphate (ThTP) from thiamine diphosphate (ThDP) and ADP. The chain is Adenylate kinase isoenzyme 1 from Oryctolagus cuniculus (Rabbit).